The chain runs to 1358 residues: DNA-directed RNA polymerase subunit beta (1358 aa).

The segment covering 1033–1051 has biased composition (basic and acidic residues); that stretch reads QGLEDRKKEHEARFDDKKG. The segment at 1033 to 1053 is disordered; it reads QGLEDRKKEHEARFDDKKGKL.

This sequence belongs to the RNA polymerase beta chain family. The RNAP catalytic core consists of 2 alpha, 1 beta, 1 beta' and 1 omega subunit. When a sigma factor is associated with the core the holoenzyme is formed, which can initiate transcription.

The catalysed reaction is RNA(n) + a ribonucleoside 5'-triphosphate = RNA(n+1) + diphosphate. Functionally, DNA-dependent RNA polymerase catalyzes the transcription of DNA into RNA using the four ribonucleoside triphosphates as substrates. This is DNA-directed RNA polymerase subunit beta from Marinobacter nauticus (strain ATCC 700491 / DSM 11845 / VT8) (Marinobacter aquaeolei).